A 193-amino-acid polypeptide reads, in one-letter code: Probable GTP-binding protein EngB (193 aa).

One can recognise an EngB-type G domain in the interval 22 to 193; sequence LLPEVALAGR…AAWEAIYRHL (172 aa). GTP contacts are provided by residues 30 to 37, 57 to 61, 75 to 78, 142 to 145, and 174 to 176; these read GRSNVGKS, GKTQT, DVPG, TKLD, and FSS. Residues S37 and T59 each contribute to the Mg(2+) site.

It belongs to the TRAFAC class TrmE-Era-EngA-EngB-Septin-like GTPase superfamily. EngB GTPase family. Mg(2+) is required as a cofactor.

Necessary for normal cell division and for the maintenance of normal septation. The polypeptide is Probable GTP-binding protein EngB (Exiguobacterium sibiricum (strain DSM 17290 / CCUG 55495 / CIP 109462 / JCM 13490 / 255-15)).